Reading from the N-terminus, the 93-residue chain is Large ribosomal subunit protein uL23cz/uL23cy (93 aa).

It belongs to the universal ribosomal protein uL23 family. As to quaternary structure, part of the 50S ribosomal subunit.

The protein localises to the plastid. It localises to the chloroplast. In terms of biological role, binds to 23S rRNA. This Eucalyptus globulus subsp. globulus (Tasmanian blue gum) protein is Large ribosomal subunit protein uL23cz/uL23cy (rpl23-A).